The sequence spans 204 residues: Apoptosis regulator R11 (204 aa).

Residues 101–120 (ELFRDGTNWGRIVAFFSFGR) carry the BH1 motif. The short motif at 152–167 (PWMQENGGWEAFVGLY) is the BH2 element. The chain crosses the membrane as a helical span at residues 181–198 (RFGRLLTIVMLTGVFALV).

It belongs to the Bcl-2 family.

Its subcellular location is the membrane. Its function is as follows. Confers strong protection against cell death. This chain is Apoptosis regulator R11, found in Xenopus laevis (African clawed frog).